Consider the following 206-residue polypeptide: Venom allergen 5 (206 aa).

Intrachain disulfides connect Cys-4–Cys-16, Cys-8–Cys-104, Cys-28–Cys-96, and Cys-172–Cys-189. The SCP domain maps to 48–191 (EEHNRFRQKV…MKIHYLICNY (144 aa)).

The protein belongs to the CRISP family. Venom allergen 5-like subfamily. Expressed by the venom gland.

The protein resides in the secreted. This is Venom allergen 5 from Polistes gallicus (Paper wasp).